The primary structure comprises 747 residues: Major facilitator superfamily domain-containing protein 6-B (747 aa).

The next 11 helical transmembrane spans lie at 15-35 (LLFFLLLCIWLFTPLASCVLQ), 75-95 (KAVLLFSVLCWVVFNCGIGFV), 222-242 (TIFLLILLVIIIGEFFSAPAV), 271-291 (WGIAMLSVGIWIDNTHITIFI), 306-326 (IAFIVFGVLMTSALIVATQFH), 391-411 (VLFVAWFMGFGYGFVFTFLFW), 420-440 (TTLFGICSVLSHISELAAYFI), 453-470 (VLYIGLACNTARYLYISY), 485-507 (GLTHASVWAACISYLSAAVPPAL), 520-540 (LGLGRGCGAMLGGVFVNFFGA), and 546-566 (GLGMASLVTLLIFSLIQWLLG). Composition is skewed to polar residues over residues 597–606 (NQSTSQPNSD) and 652–668 (NNDCQGQQERSEQQTSA). Disordered stretches follow at residues 597 to 625 (NQSTSQPNSDSKSRKTRHQEEQEDPNKPA) and 652 to 747 (NNDC…PTTH). The segment covering 675–685 (STSSQPNASSS) has biased composition (low complexity).

The protein belongs to the major facilitator superfamily. MFSD6 family.

It localises to the membrane. In Danio rerio (Zebrafish), this protein is Major facilitator superfamily domain-containing protein 6-B (mfsd6b).